Consider the following 142-residue polypeptide: Extracellular globin-1 (142 aa).

The region spanning 1–142 (ECLVTEGLKV…DQIIDGIKDI (142 aa)) is the Globin domain. A disulfide bridge connects residues Cys-2 and Cys-131. His-94 lines the heme b pocket.

Belongs to the globin family. As to quaternary structure, the extracellular hemoglobin of the earthworm consists of 12 subunits that have a hexagonal bilayer structure with a molecular weight near 3.8 million. Each one-twelfth subunit is composed primarily of disulfide linked trimers (chains A, B, and C) and monomers (chain D).

The polypeptide is Extracellular globin-1 (Lumbricus terrestris (Common earthworm)).